The chain runs to 118 residues: MARIAGINIPENKHTLIALTAIYGIGKKRSKFICSIANIPEHSKIVDLNEEQIDLLRTHVAKYVIEGDLRRERTLNIKRLIDLSCYRGLRHRRSLPVHGQRTKTNARTCKGPRKPIKK.

The tract at residues 94–118 (SLPVHGQRTKTNARTCKGPRKPIKK) is disordered.

This sequence belongs to the universal ribosomal protein uS13 family. As to quaternary structure, part of the 30S ribosomal subunit. Forms a loose heterodimer with protein S19. Forms two bridges to the 50S subunit in the 70S ribosome.

Functionally, located at the top of the head of the 30S subunit, it contacts several helices of the 16S rRNA. In the 70S ribosome it contacts the 23S rRNA (bridge B1a) and protein L5 of the 50S subunit (bridge B1b), connecting the 2 subunits; these bridges are implicated in subunit movement. Contacts the tRNAs in the A and P-sites. This Buchnera aphidicola subsp. Acyrthosiphon pisum (strain 5A) protein is Small ribosomal subunit protein uS13.